The sequence spans 313 residues: MNTFSQVWVFSDTPSRLPELMNGAQALANQINTFVLNDADGAQAIQLGANHVWKLSGKPDERMIEDYAGVMADTIRQHGADGLVLLPNTRRGKLLAAKLGYRLKAAVSNDASTVSVQDGKATVKHMVYGGLAIGEERIATPYAVLTISSGTFDAAQPDASRTGETHTVEWQAPAVAITRTATQARQSNSVDLDKARLVVSVGRGIGSKENIALAEQLCKAIGAELACSRPVAENEKWMEHERYVGISNLMLKPELYLAVGISGQIQHMVGANASQTIFAINKDKNAPIFQYADYGIVGDAVKILPALTAALAR.

Position 255-283 (255-283 (LYLAVGISGQIQHMVGANASQTIFAINKD)) interacts with FAD.

This sequence belongs to the ETF alpha-subunit/FixB family. In terms of assembly, heterodimer of FixA and FixB.

The protein operates within amine and polyamine metabolism; carnitine metabolism. Functionally, required for anaerobic carnitine reduction. May bring reductant to CaiA. This Escherichia coli (strain SMS-3-5 / SECEC) protein is Protein FixB.